The chain runs to 1044 residues: Isoleucine--tRNA ligase (1044 aa).

The 'HIGH' region motif lies at 48-58 (PFATGLPHFGH). The 'KMSKS' region motif lies at 594 to 598 (KMSKS). ATP is bound at residue lysine 597.

The protein belongs to the class-I aminoacyl-tRNA synthetase family. IleS type 2 subfamily. In terms of assembly, monomer. The cofactor is Zn(2+).

The protein resides in the cytoplasm. It catalyses the reaction tRNA(Ile) + L-isoleucine + ATP = L-isoleucyl-tRNA(Ile) + AMP + diphosphate. Its function is as follows. Catalyzes the attachment of isoleucine to tRNA(Ile). As IleRS can inadvertently accommodate and process structurally similar amino acids such as valine, to avoid such errors it has two additional distinct tRNA(Ile)-dependent editing activities. One activity is designated as 'pretransfer' editing and involves the hydrolysis of activated Val-AMP. The other activity is designated 'posttransfer' editing and involves deacylation of mischarged Val-tRNA(Ile). The protein is Isoleucine--tRNA ligase of Borrelia turicatae (strain 91E135).